The following is a 108-amino-acid chain: MADPRVRQIKIKTGVVRRLVKERVMYEKEAKQQEEKIEKMKAEDGENYAIKKQAEILQESRMMIPDCQRRLEAAYTDLQQILESEKDLEEAEEYKEARVVLDSVKLEA.

At A2 the chain carries N-acetylalanine.

It belongs to the TBCA family. In terms of assembly, supercomplex made of cofactors A to E. Cofactors A and D function by capturing and stabilizing tubulin in a quasi-native conformation. Cofactor E binds to the cofactor D-tubulin complex; interaction with cofactor C then causes the release of tubulin polypeptides that are committed to the native state. Widely expressed, but is most abundant in the testis.

The protein localises to the cytoplasm. The protein resides in the cytoskeleton. In terms of biological role, tubulin-folding protein; involved in the early step of the tubulin folding pathway. This Mus musculus (Mouse) protein is Tubulin-specific chaperone A (Tbca).